We begin with the raw amino-acid sequence, 440 residues long: Diels-Alderase mycB (440 aa).

The first 18 residues, 1–18, serve as a signal peptide directing secretion; sequence MGYLVKLACGLLLPLATA. Asn80, Asn155, and Asn332 each carry an N-linked (GlcNAc...) asparagine glycan.

The protein belongs to the Diels-Alderase family.

It carries out the reaction (5S)-5-(2-methylpropyl)-3-[(2E,6R,8E,10E,12E)-6,8,10,12-tetramethyltetradeca-2,8,10,12-tetraenoyl]-2,5-dihydro-1H-pyrrol-2-one = (5S)-3-[(1S,2R,4aR,6R,8aS)-2-(but-2-en-2-yl)-3,4a,6-trimethyl-1,2,4a,5,6,7,8,8a-octahydronaphthalene-1-carbonyl]-5-(2-methylpropyl)-2,5-dihydro-1H-pyrrol-2-one. The enzyme catalyses (5Z)-5-(2-methylpropylidene)-3-[(2E,6R,8E,10E,12E)-6,8,10,12-tetramethyltetradeca-2,8,10,12-tetraenoyl]-2,5-dihydro-1H-pyrrol-2-one = myceliothermophin E. It functions in the pathway mycotoxin biosynthesis. Functionally, diels-Alderase; part of the gene cluster that mediates the biosynthesis of myceliothermophins, mycotoxins that contain a trans-fused decalin ring system connected to a conjugated 3-pyrrolin-2-one moiety and that have potential anti-tumor properties. The polyketide synthase module (PKS) of the PKS-NRPS mycA is responsible for the synthesis of the octaketide backbone. The downstream nonribosomal peptide synthetase (NRPS) module then amidates the carboxyl end of the octaketide with a leucine. A reductase-like domain (R) at the C-terminus catalyzes the reductive release of the polyketide-amino acid intermediate. Because mycA lacks a designated enoylreductase (ER) domain, the required activity is provided the enoyl reductase mycC. Following mycA-catalyzed construction and release of aminoacyl polyketide aldehyde, Knoevenagel condensation yields the expected ketone. This C18 keto acyclic precursor is the substrate of the Diels-Alderase mycB, that catalyzes the Diels-Alder cycloaddition to produce myceliothermophin E. A yet unknown oxygenase involved in the production of myceliothermophin A, via substitution with a hydroxyl group at the C21, has still to be identified. This is Diels-Alderase mycB from Thermothelomyces thermophilus (strain ATCC 42464 / BCRC 31852 / DSM 1799) (Sporotrichum thermophile).